The following is a 22-amino-acid chain: IDAFQDTLYTHTLRTYLGRPWK.

Asp-6 acts as the Proton donor in catalysis. The substrate site is built by Arg-19 and Trp-21.

This sequence belongs to the pectinesterase family.

The protein localises to the secreted. It is found in the cell wall. The catalysed reaction is [(1-&gt;4)-alpha-D-galacturonosyl methyl ester](n) + n H2O = [(1-&gt;4)-alpha-D-galacturonosyl](n) + n methanol + n H(+). Its pathway is glycan metabolism; pectin degradation; 2-dehydro-3-deoxy-D-gluconate from pectin: step 1/5. This is Pectinesterase from Capsicum chinense (Scotch bonnet).